Consider the following 86-residue polypeptide: uncharacterized protein (86 aa).

TPR repeat units lie at residues 8-41 (AEYYYKKGVEVGNKGDVEKALEYFNKAIELNPFY) and 42-75 (RDAWFNKALALRILGRYEEARECFFRGLAVEKHL).

This is an uncharacterized protein from Methanocaldococcus jannaschii (strain ATCC 43067 / DSM 2661 / JAL-1 / JCM 10045 / NBRC 100440) (Methanococcus jannaschii).